We begin with the raw amino-acid sequence, 433 residues long: KH domain-containing, RNA-binding, signal transduction-associated protein 1 (433 aa).

Residues 1-79 (MQRRDDSSAR…PLLPGGAVKM (79 aa)) are disordered. The segment covering 41–76 (GAQHPQPLLTGGAAAGSSGAQGPAAANPAPLLPGGA) has biased composition (low complexity). Positions 82 to 243 (ENKYLPELMA…VKKFLVPDMM (162 aa)) are involved in homodimerization. The 27-residue stretch at 171 to 197 (QEETGAKISVLGKGSMRDKAKEEELRK) folds into the KH domain. Disordered regions lie at residues 259-305 (GVPE…ALVR), 317-351 (AAVA…PPPP), and 403-433 (QDDW…YGRY). A compositionally biased stretch (pro residues) spans 277–300 (APPPPPPVPRGRGVGPPPPPPPPR). A compositionally biased stretch (low complexity) spans 329 to 342 (VRGAPAPRARAAGI). Residues 424–433 (AYREHPYGRY) are compositionally biased toward basic and acidic residues.

This sequence belongs to the KHDRBS family. As to quaternary structure, self-associates to form homooligomers when bound to RNA, oligomerization appears to be limited when binding to proteins. In terms of processing, tyrosine phosphorylated by several non-receptor tyrosine kinases including LCK, FYN and JAK3. Post-translationally, acetylated. Positively correlates with ability to bind RNA. Methylated by HRMT1L2. Required for nuclear localization.

It is found in the nucleus. Its subcellular location is the cytoplasm. The protein resides in the membrane. Recruited and tyrosine phosphorylated by several receptor systems, for example the T-cell, leptin and insulin receptors. Once phosphorylated, functions as an adapter protein in signal transduction cascades by binding to SH2 and SH3 domain-containing proteins. Role in G2-M progression in the cell cycle. Represses CBP-dependent transcriptional activation apparently by competing with other nuclear factors for binding to CBP. Also acts as a putative regulator of mRNA stability and/or translation rates and mediates mRNA nuclear export. Plays a role in the regulation of alternative splicing and influences mRNA splice site selection and exon inclusion. The sequence is that of KH domain-containing, RNA-binding, signal transduction-associated protein 1 from Gallus gallus (Chicken).